A 311-amino-acid polypeptide reads, in one-letter code: Biotin synthase (311 aa).

A Radical SAM core domain is found at 32–258 (NGVQFCQLLN…LFPLSRIRLA (227 aa)). [4Fe-4S] cluster-binding residues include cysteine 47, cysteine 51, and cysteine 54. [2Fe-2S] cluster contacts are provided by cysteine 91, cysteine 124, cysteine 184, and arginine 256.

The protein belongs to the radical SAM superfamily. Biotin synthase family. As to quaternary structure, homodimer. [4Fe-4S] cluster is required as a cofactor. Requires [2Fe-2S] cluster as cofactor.

The enzyme catalyses (4R,5S)-dethiobiotin + (sulfur carrier)-SH + 2 reduced [2Fe-2S]-[ferredoxin] + 2 S-adenosyl-L-methionine = (sulfur carrier)-H + biotin + 2 5'-deoxyadenosine + 2 L-methionine + 2 oxidized [2Fe-2S]-[ferredoxin]. It participates in cofactor biosynthesis; biotin biosynthesis; biotin from 7,8-diaminononanoate: step 2/2. In terms of biological role, catalyzes the conversion of dethiobiotin (DTB) to biotin by the insertion of a sulfur atom into dethiobiotin via a radical-based mechanism. This Methylacidiphilum infernorum (isolate V4) (Methylokorus infernorum (strain V4)) protein is Biotin synthase.